We begin with the raw amino-acid sequence, 597 residues long: NADPH-dependent diflavin oxidoreductase 1 (597 aa).

The 145-residue stretch at leucine 6–tryptophan 150 folds into the Flavodoxin-like domain. Residues serine 12–alanine 17, alanine 59–glycine 62, leucine 97–asparagine 106, and aspartate 132 contribute to the FMN site. The segment at glycine 188–lysine 207 is disordered. One can recognise an FAD-binding FR-type domain in the interval serine 206–glutamate 447. FAD is bound by residues arginine 350, arginine 382–serine 385, and glycine 416–serine 419. NADP(+) is bound by residues threonine 460, serine 515–arginine 516, lysine 521–glutamine 525, and aspartate 558. FAD is bound at residue tryptophan 596.

The protein belongs to the NADPH-dependent diflavin oxidoreductase NDOR1 family. It in the N-terminal section; belongs to the flavodoxin family. In the C-terminal section; belongs to the flavoprotein pyridine nucleotide cytochrome reductase family. In terms of assembly, interacts with CIAPIN1; as part of the cytosolic iron-sulfur (Fe-S) protein assembly (CIA) machinery. Interacts with DCPS. It depends on FAD as a cofactor. The cofactor is FMN. As to expression, low expression in brain, heart, kidney, pancreas, prostate and skeletal muscle. Highest levels in the placenta. Expressed in cancer cell lines including promyelocytic leukemia, HeLaS3, chronic myelagenous leukemia, lymphoblastic leukemia, Burkitt's lymphoma, colorectal adenocarcinoma, lung carcinoma, and melanoma G-361.

Its subcellular location is the cytoplasm. The protein resides in the perinuclear region. It catalyses the reaction 2 oxidized [2Fe-2S]-[protein] + NADPH = 2 reduced [2Fe-2S]-[protein] + NADP(+) + H(+). Its function is as follows. NADPH-dependent reductase which is a central component of the cytosolic iron-sulfur (Fe-S) protein assembly (CIA) machinery. Transfers electrons from NADPH via its FAD and FMN prosthetic groups to the [2Fe-2S] cluster of CIAPIN1, another key component of the CIA machinery. In turn, this reduced cluster provides electrons for assembly of cytosolic iron-sulfur cluster proteins. It can also reduce the [2Fe-2S] cluster of CISD1 and activate this protein implicated in Fe/S cluster repair. In vitro can fully activate methionine synthase/MTR in the presence of soluble cytochrome b5/CYB5A. The protein is NADPH-dependent diflavin oxidoreductase 1 of Homo sapiens (Human).